The chain runs to 308 residues: Uridylate cyclase (308 aa).

The Mn(2+) site is built by Asp62 and Asp106.

The protein belongs to the adenylyl cyclase class-4/guanylyl cyclase family. Pyrimidine cyclase subfamily. Homodimer. Mn(2+) is required as a cofactor.

It localises to the cytoplasm. It carries out the reaction GTP = 3',5'-cyclic GMP + diphosphate. It catalyses the reaction UTP = 3',5'-cyclic UMP + diphosphate. Functionally, pycsar (pyrimidine cyclase system for antiphage resistance) provides immunity against bacteriophage. The pyrimidine cyclase (PycC) synthesizes cyclic nucleotides in response to infection; these serve as specific second messenger signals. The signals activate the adjacent effector, leading to bacterial cell death and abortive phage infection. A clade D Pycsar system. The pyrimidine cyclase gene of a two-gene Pycsar system, generates cyclic UMP (cUMP) from UTP as well as cGMP from GTP to a lesser extent, has little to no activity on ATP or CTP. Expression of this and adjacent effector PtPycTM (AC A0A4Q9KQH5) probably confers resistance to bacteriophage. The genes are probably only expressed in response to bacteriophage infection. The sequence is that of Uridylate cyclase from Propioniciclava tarda.